Reading from the N-terminus, the 433-residue chain is MMAVAEASQESLKQRLNVSGGNGLKGTLRVSGAKNSALVLMTASLLSEETIELTNIPSLTDIDGMSAILESLGVQVDRQSDCIRLTAAELSGSAPPYELVNSLRASFFSIGPLLGRLGHAQVPLPGGCRIGARPVVEHIRGLKALGAVVNVEHGIVTASVPGSKKRLTGAQIVLDCPSVGATETILMAAVLADGVSTIENAAQEPEVQDLANLLNSMGGQVSGAGGPLITVQGVERLRGCSNYPVIPDRIEAGTFLMAAAITRSPLVVEPVIPEHLSAVIQKLRDCGCSIQIKGRAVTITPGEITAVDITTQPFPGFPTDLQAPFMALMCTAKGTSVISEKIYENRLQHVAELQRMGASIRLEGSTAIVEGVAQLSAAPVTGTDLRAAAAMVLAGLSAKGITEVAGLKHLDRGYDDLEAKLSAAGAEVKRNIP.

Residue 34–35 (KN) coordinates phosphoenolpyruvate. A UDP-N-acetyl-alpha-D-glucosamine-binding site is contributed by Arg104. Cys128 serves as the catalytic Proton donor. The residue at position 128 (Cys128) is a 2-(S-cysteinyl)pyruvic acid O-phosphothioketal. Residues Asp320 and Ile342 each coordinate UDP-N-acetyl-alpha-D-glucosamine.

Belongs to the EPSP synthase family. MurA subfamily.

Its subcellular location is the cytoplasm. It catalyses the reaction phosphoenolpyruvate + UDP-N-acetyl-alpha-D-glucosamine = UDP-N-acetyl-3-O-(1-carboxyvinyl)-alpha-D-glucosamine + phosphate. It functions in the pathway cell wall biogenesis; peptidoglycan biosynthesis. Functionally, cell wall formation. Adds enolpyruvyl to UDP-N-acetylglucosamine. This is UDP-N-acetylglucosamine 1-carboxyvinyltransferase from Synechococcus sp. (strain CC9605).